Here is a 289-residue protein sequence, read N- to C-terminus: BTB/POZ domain-containing protein KCTD7 (289 aa).

The interval 1 to 42 (MVVVTGREPDSRHSDGAMSSSEAEDDFLEPATPTATQAGHGL) is disordered. Residues 53–141 (VPLNIGGAHF…YAIGPLLEQL (89 aa)) form the BTB domain.

Interacts with CUL3. High expression in brain, particularly in post-mitotic neurons. Expressed in the mitral cells of the olfactory bulbs, the hippocampus, the deep layers of the cerebral cortex and Purkinje cells of the cerebellum. Not detected in astrocytes or microglial cells. Also expressed in heart, liver, spleen and kidney.

Its subcellular location is the cell membrane. It localises to the cytoplasm. It is found in the cytosol. In terms of biological role, may be involved in the control of excitability of cortical neurons. The chain is BTB/POZ domain-containing protein KCTD7 (Kctd7) from Mus musculus (Mouse).